The sequence spans 846 residues: Rho GTPase-activating protein 17 (846 aa).

One can recognise a BAR domain in the interval 14–246; it reads QTVGRAEKTE…MRAHQDKWAE (233 aa). The Rho-GAP domain maps to 252–442; that stretch reads TPLEEHLKRS…PIIQHADWFF (191 aa). The segment covering 459-475 has biased composition (polar residues); the sequence is TPNSNHSSHTGNDSDSG. The tract at residues 459 to 482 is disordered; the sequence is TPNSNHSSHTGNDSDSGTLERKRP. Serine 484 and serine 575 each carry phosphoserine. Positions 519-807 are disordered; sequence IAPAFQPPLP…ASRIVTDTNS (289 aa). Polar residues predominate over residues 592 to 619; it reads RNSNQMTTVPNQAQTGGNSHQLSVSTPH. Residues 637–650 show a composition bias toward pro residues; the sequence is APAPPKPGNLPPGH. Residues 653–690 show a composition bias toward low complexity; that stretch reads GQSSPGTGTSPKPSARSPSPPQQQQQQQQQQQQQQQQQ. A phosphoserine mark is found at serine 698 and serine 700. 2 stretches are compositionally biased toward pro residues: residues 704–717 and 726–741; these read IQAP…PPTQ and EPGP…PSTP. Residues threonine 730, threonine 734, and threonine 736 each carry the phosphothreonine modification. An SH3-binding motif is present at residues 730 to 743; the sequence is TPPQTPTPPSTPPL. Serine 739 carries the post-translational modification Phosphoserine. Phosphothreonine is present on threonine 740. The segment covering 746–757 has biased composition (polar residues); that stretch reads QNPSQSETTQLH. Residues 772 to 782 show a composition bias toward pro residues; it reads RPSVPPPPHPP. Over residues 791–807 the composition is skewed to polar residues; sequence LTSSVPTASRIVTDTNS.

As to quaternary structure, component of a complex whose core is composed of ARHGAP17, AMOT, PALS1, PATJ and PARD3/PAR3. Interacts with NHERF1, FNBP1, TRIP10, CAPZA (CAPZA1, CAPZA2 or CAPZA3), CAPZB, CD2AP and SH3KBP1/CIN85.

The protein resides in the membrane. Its subcellular location is the cytoplasm. It is found in the cell junction. It localises to the tight junction. Its function is as follows. Rho GTPase-activating protein involved in the maintenance of tight junction by regulating the activity of CDC42, thereby playing a central role in apical polarity of epithelial cells. Specifically acts as a GTPase activator for the CDC42 GTPase by converting it to an inactive GDP-bound state. The complex formed with AMOT acts by regulating the uptake of polarity proteins at tight junctions, possibly by deciding whether tight junction transmembrane proteins are recycled back to the plasma membrane or sent elsewhere. Participates in the Ca(2+)-dependent regulation of exocytosis, possibly by catalyzing GTPase activity of Rho family proteins and by inducing the reorganization of the cortical actin filaments. Acts as a GTPase activator in vitro for RAC1. The sequence is that of Rho GTPase-activating protein 17 (Arhgap17) from Mus musculus (Mouse).